The sequence spans 361 residues: Phosphoserine aminotransferase (361 aa).

Residues Ser-9 and Arg-42 each contribute to the L-glutamate site. Pyridoxal 5'-phosphate contacts are provided by residues 76-77, Trp-102, Thr-153, Asp-173, and Gln-196; that span reads AR. N6-(pyridoxal phosphate)lysine is present on Lys-197. Residue 238–239 participates in pyridoxal 5'-phosphate binding; that stretch reads NT.

It belongs to the class-V pyridoxal-phosphate-dependent aminotransferase family. SerC subfamily. In terms of assembly, homodimer. The cofactor is pyridoxal 5'-phosphate.

The protein localises to the cytoplasm. It catalyses the reaction O-phospho-L-serine + 2-oxoglutarate = 3-phosphooxypyruvate + L-glutamate. It carries out the reaction 4-(phosphooxy)-L-threonine + 2-oxoglutarate = (R)-3-hydroxy-2-oxo-4-phosphooxybutanoate + L-glutamate. It functions in the pathway amino-acid biosynthesis; L-serine biosynthesis; L-serine from 3-phospho-D-glycerate: step 2/3. Its pathway is cofactor biosynthesis; pyridoxine 5'-phosphate biosynthesis; pyridoxine 5'-phosphate from D-erythrose 4-phosphate: step 3/5. In terms of biological role, catalyzes the reversible conversion of 3-phosphohydroxypyruvate to phosphoserine and of 3-hydroxy-2-oxo-4-phosphonooxybutanoate to phosphohydroxythreonine. This Serratia proteamaculans (strain 568) protein is Phosphoserine aminotransferase.